The following is a 240-amino-acid chain: Gas vesicle protein C (240 aa).

The span at 1 to 13 shows a compositional bias: basic and acidic residues; sequence MALKDKWQQDRIG. The interval 1–20 is disordered; it reads MALKDKWQQDRIGRQQGVQE. Repeats lie at residues 18-50, 51-83, 84-116, 117-149, and 150-207; these read VQER…RQGF, VTGV…LENF, IQQL…LSEF, REDL…LAIF, and RQTL…LQDY. Residues 18 to 207 form a 5 X 33 AA tandem repeats region; sequence VQERQQQVQT…GVFRAELQDY (190 aa).

It belongs to the gas vesicle GvpC family.

Its subcellular location is the gas vesicle. In terms of biological role, confers stability, involved in shaping gas vesicles, hollow, gas filled proteinaceous nanostructures. During planktonic growth they allow positioning of the organism at a favorable depth for light or nutrient acquisition. This is Gas vesicle protein C from Planktothrix agardhii (Oscillatoria agardhii).